Here is a 702-residue protein sequence, read N- to C-terminus: Polyribonucleotide nucleotidyltransferase 1 (702 aa).

Mg(2+) contacts are provided by Asp-483 and Asp-489. A KH domain is found at Pro-550 to Ile-609. An S1 motif domain is found at Gly-619–Lys-687.

This sequence belongs to the polyribonucleotide nucleotidyltransferase family. It depends on Mg(2+) as a cofactor.

The protein resides in the cytoplasm. It carries out the reaction RNA(n+1) + phosphate = RNA(n) + a ribonucleoside 5'-diphosphate. Functionally, involved in mRNA degradation. Catalyzes the phosphorolysis of single-stranded polyribonucleotides processively in the 3'- to 5'-direction. In Alkaliphilus metalliredigens (strain QYMF), this protein is Polyribonucleotide nucleotidyltransferase 1.